We begin with the raw amino-acid sequence, 323 residues long: Probable cell division protein WhiA (323 aa).

Residues 275 to 309 (TLKELGEMLTTGQVSKSGINHRLRKLDQIAERLRS) constitute a DNA-binding region (H-T-H motif).

The protein belongs to the WhiA family.

Functionally, involved in cell division and chromosome segregation. The chain is Probable cell division protein WhiA from Listeria monocytogenes serotype 4a (strain HCC23).